We begin with the raw amino-acid sequence, 205 residues long: MSASPSPSITGLLLAGGRATRMDGADKGLQLLDGTPLALHVLRRLSPQVDETLISANRNADRYAELGAPFDARIVADETADFPGPLAGLLAGMRAARAPLVACAPCDTPYLPADLIARLHAALDAQQADIAMAVTVDAQHARSPQPTFALLRTSLADDLAAALAAGERKVRAWYARHKTVEVEFRDERAFYNANSWHELAALARR.

Residues 14-16 (LAG), K27, D77, and D107 contribute to the GTP site. D107 contributes to the Mg(2+) binding site.

Belongs to the MobA family. Monomer. Mg(2+) serves as cofactor.

Its subcellular location is the cytoplasm. The catalysed reaction is Mo-molybdopterin + GTP + H(+) = Mo-molybdopterin guanine dinucleotide + diphosphate. Its function is as follows. Transfers a GMP moiety from GTP to Mo-molybdopterin (Mo-MPT) cofactor (Moco or molybdenum cofactor) to form Mo-molybdopterin guanine dinucleotide (Mo-MGD) cofactor. The sequence is that of Molybdenum cofactor guanylyltransferase from Burkholderia ambifaria (strain MC40-6).